A 263-amino-acid polypeptide reads, in one-letter code: MIDQTAIIHDTAIVHESAVIGKGVEIGPFSVIGAEVEIGDNTWVGSHVVIKGPAKLGRGNKIFQHTSIGEDCQDKKYAGERTFLEIGDNNVFRENCTVHRGTIQDQSLTKVGSGNLFMVNVHVAHDCIIGDNCIFANNATLAGHVVIGDFVIFGGLSAIHQFGRVGSHAFIGGCAALNKDVPPYVMAAGNYAKPFGVNSEGLRRRGFSAEAISAVKRAYKEIFRSGKTVEEVLPVLTEMAATEPAVQLYVDFLKDNERGIIRA.

Belongs to the transferase hexapeptide repeat family. LpxA subfamily. As to quaternary structure, homotrimer.

It localises to the cytoplasm. The enzyme catalyses a (3R)-hydroxyacyl-[ACP] + UDP-N-acetyl-alpha-D-glucosamine = a UDP-3-O-[(3R)-3-hydroxyacyl]-N-acetyl-alpha-D-glucosamine + holo-[ACP]. It participates in glycolipid biosynthesis; lipid IV(A) biosynthesis; lipid IV(A) from (3R)-3-hydroxytetradecanoyl-[acyl-carrier-protein] and UDP-N-acetyl-alpha-D-glucosamine: step 1/6. Involved in the biosynthesis of lipid A, a phosphorylated glycolipid that anchors the lipopolysaccharide to the outer membrane of the cell. The sequence is that of Acyl-[acyl-carrier-protein]--UDP-N-acetylglucosamine O-acyltransferase from Aeromonas salmonicida (strain A449).